The primary structure comprises 202 residues: 7-methyl-GTP pyrophosphatase (202 aa).

D70 acts as the Proton acceptor in catalysis.

This sequence belongs to the Maf family. YceF subfamily. A divalent metal cation serves as cofactor.

It localises to the cytoplasm. It carries out the reaction N(7)-methyl-GTP + H2O = N(7)-methyl-GMP + diphosphate + H(+). Its function is as follows. Nucleoside triphosphate pyrophosphatase that hydrolyzes 7-methyl-GTP (m(7)GTP). May have a dual role in cell division arrest and in preventing the incorporation of modified nucleotides into cellular nucleic acids. The chain is 7-methyl-GTP pyrophosphatase from Pseudoalteromonas translucida (strain TAC 125).